A 239-amino-acid chain; its full sequence is tRNA (guanine-N(1)-)-methyltransferase (239 aa).

S-adenosyl-L-methionine contacts are provided by residues Gly113 and 133–138 (IGDYVL). The segment at 218–239 (ERRPDLWAARATQNPPERKTNG) is disordered.

This sequence belongs to the RNA methyltransferase TrmD family. In terms of assembly, homodimer.

The protein resides in the cytoplasm. It carries out the reaction guanosine(37) in tRNA + S-adenosyl-L-methionine = N(1)-methylguanosine(37) in tRNA + S-adenosyl-L-homocysteine + H(+). In terms of biological role, specifically methylates guanosine-37 in various tRNAs. The chain is tRNA (guanine-N(1)-)-methyltransferase from Nitrobacter winogradskyi (strain ATCC 25391 / DSM 10237 / CIP 104748 / NCIMB 11846 / Nb-255).